The chain runs to 511 residues: GMP synthase [glutamine-hydrolyzing] (511 aa).

In terms of domain architecture, Glutamine amidotransferase type-1 spans 5–195 (DILVLDFGSQ…AKYACNCESI (191 aa)). C82 (nucleophile) is an active-site residue. Residues H169 and E171 contribute to the active site. One can recognise a GMPS ATP-PPase domain in the interval 196-386 (WNMGSFAKTQ…LGLSKEVVYR (191 aa)). 223–229 (SGGVDSS) serves as a coordination point for ATP.

As to quaternary structure, homodimer.

The enzyme catalyses XMP + L-glutamine + ATP + H2O = GMP + L-glutamate + AMP + diphosphate + 2 H(+). The protein operates within purine metabolism; GMP biosynthesis; GMP from XMP (L-Gln route): step 1/1. Its function is as follows. Catalyzes the synthesis of GMP from XMP. This Campylobacter jejuni subsp. jejuni serotype O:2 (strain ATCC 700819 / NCTC 11168) protein is GMP synthase [glutamine-hydrolyzing] (guaA).